Here is a 1214-residue protein sequence, read N- to C-terminus: RNA-directed RNA polymerase VP1 (1214 aa).

The 196-residue stretch at 610 to 805 folds into the RdRp catalytic domain; sequence APHDVMAPQL…KRTIVGNNVA (196 aa).

The protein belongs to the reoviridae RNA-directed RNA polymerase family.

The protein localises to the virion. It carries out the reaction RNA(n) + a ribonucleoside 5'-triphosphate = RNA(n+1) + diphosphate. Its function is as follows. RNA-directed RNA polymerase that is involved in transcription and genome replication. Following infection, it catalyzes the synthesis of fully conservative plus strands. After core assembly, which consists in recruitment of one capped plus-strand for each genomic segments and polymerase complexes, the polymerase switches mode and catalyzes the synthesis of complementary minus-strands. The polypeptide is RNA-directed RNA polymerase VP1 (Segment-1) (Banna virus (BAV)).